The sequence spans 187 residues: 1,6-anhydro-N-acetylmuramyl-L-alanine amidase AmpD (187 aa).

The N-acetylmuramoyl-L-alanine amidase domain occupies 30–167 (LLVVHNISLP…APERKTDPGP (138 aa)). Histidine 34 is a binding site for Zn(2+). The Proton acceptor role is filled by glutamate 116. Zn(2+) is bound by residues histidine 154 and aspartate 164.

The protein belongs to the N-acetylmuramoyl-L-alanine amidase 2 family. Zn(2+) is required as a cofactor.

Its subcellular location is the cytoplasm. The catalysed reaction is Hydrolyzes the link between N-acetylmuramoyl residues and L-amino acid residues in certain cell-wall glycopeptides.. With respect to regulation, amidase activity is inhibited by metal chelators such as EDTA, dipicolinic acid or 1,10-phenanthroline. In terms of biological role, involved in cell wall peptidoglycan recycling. Specifically cleaves the amide bond between the lactyl group of N-acetylmuramic acid and the alpha-amino group of the L-alanine in degradation products containing an anhydro N-acetylmuramyl moiety. Is also involved in beta-lactamase induction. This Citrobacter freundii protein is 1,6-anhydro-N-acetylmuramyl-L-alanine amidase AmpD.